Reading from the N-terminus, the 256-residue chain is Thiazole synthase (256 aa).

Catalysis depends on Lys-96, which acts as the Schiff-base intermediate with DXP. 1-deoxy-D-xylulose 5-phosphate contacts are provided by residues Gly-157, 183-184 (AG), and 205-206 (NT).

This sequence belongs to the ThiG family. As to quaternary structure, homotetramer. Forms heterodimers with either ThiH or ThiS.

It is found in the cytoplasm. It catalyses the reaction [ThiS sulfur-carrier protein]-C-terminal-Gly-aminoethanethioate + 2-iminoacetate + 1-deoxy-D-xylulose 5-phosphate = [ThiS sulfur-carrier protein]-C-terminal Gly-Gly + 2-[(2R,5Z)-2-carboxy-4-methylthiazol-5(2H)-ylidene]ethyl phosphate + 2 H2O + H(+). Its pathway is cofactor biosynthesis; thiamine diphosphate biosynthesis. Catalyzes the rearrangement of 1-deoxy-D-xylulose 5-phosphate (DXP) to produce the thiazole phosphate moiety of thiamine. Sulfur is provided by the thiocarboxylate moiety of the carrier protein ThiS. In vitro, sulfur can be provided by H(2)S. This chain is Thiazole synthase, found in Bacillus cereus (strain ATCC 10987 / NRS 248).